A 263-amino-acid polypeptide reads, in one-letter code: Coiled-coil domain-containing protein 172 (263 aa).

Positions 13 to 191 form a coiled coil; it reads TEHQAEESRR…LKVLKDEETE (179 aa).

It belongs to the CCDC172 family. In terms of assembly, may interact with TEKT2. As to expression, detected in spermatozoa (at protein level). Predominantly expressed in testis and in spermatozoa from the caput and corpus epididymis.

The protein resides in the cytoplasm. The protein localises to the cell projection. It is found in the cilium. This Rattus norvegicus (Rat) protein is Coiled-coil domain-containing protein 172 (Ccdc172).